The sequence spans 1210 residues: Histone-lysine N-methyltransferase EHMT2 (1210 aa).

Low complexity predominate over residues 1-23 (MAAAAGAAAAAAAEGEAPAEMGA). Disordered regions lie at residues 1–262 (MAAA…LEEW) and 280–386 (DERV…EYME). Residue Ala2 is modified to N-acetylalanine. Residues 26-38 (LEKETRGATERVH) are compositionally biased toward basic and acidic residues. A Phosphoserine modification is found at Ser40. At Thr44 the chain carries Phosphothreonine. The residue at position 47 (Ser47) is a Phosphoserine. Positions 105 to 128 (GRILLGHATKSFPSSPSKGGSCPS) are enriched in low complexity. A Phosphoserine modification is found at Ser140. Residues 155–165 (PGAQGAAAAGS) are compositionally biased toward low complexity. Ser173 is subject to Phosphoserine. Lys185 carries the post-translational modification N6,N6,N6-trimethyllysine; by EHMT2; alternate. Lys185 carries the post-translational modification N6,N6-dimethyllysine; by EHMT2; alternate. Positions 198 to 216 (PEKRPPEIQHFRMSDDVHS) are enriched in basic and acidic residues. Glycyl lysine isopeptide (Lys-Gly) (interchain with G-Cter in SUMO2) cross-links involve residues Lys219 and Lys229. Ser232, Ser242, and Ser246 each carry phosphoserine. The span at 280–291 (DERVDSDSKSEV) shows a compositional bias: basic and acidic residues. The segment covering 298-327 (LSEEEEEEEEEEEEEEEEEEEEEEEEDEES) has biased composition (acidic residues). Over residues 338-347 (GRRKAKKKWR) the composition is skewed to basic residues. Residues Ser350, Ser412, and Ser413 each carry the phosphoserine modification. Residues 548 to 608 (IPRGDGVTPP…LADTIDSSGP (61 aa)) are disordered. Thr555 carries the phosphothreonine modification. Residue Ser569 is modified to Phosphoserine. A Glycyl lysine isopeptide (Lys-Gly) (interchain with G-Cter in SUMO2) cross-link involves residue Lys634. ANK repeat units follow at residues 649 to 678 (FHPRQLYLSVKQGELQKVILMLLDNLDPNF), 684 to 713 (SKRTPLHAAAQKGSVEICHVLLQAGANINA), 717 to 746 (QQRTPLMEAVVNNHLEVARYMVQRGGCVYS), 750 to 780 (DGSTCLHHAAKIGNLEMVSLLLSTGQVDVNA), 784 to 813 (GGWTPIIWAAEHKHIEVIRMLLTRGADVTL), 817 to 846 (EENICLHWASFTGSAAIAEVLLNARCDLHA), and 850 to 879 (HGDTPLHIAARESYHDCVLLFLSRGANPEL). The segment at 817–819 (EEN) is histone H3K9me binding. Positions 972–1035 (QHCTCVDDCS…NCKNRVVQSG (64 aa)) constitute a Pre-SET domain. Positions 974, 976, 980, 985, 987, 1017, 1021, 1023, and 1027 each coordinate Zn(2+). The region spanning 1038–1155 (VRLQLYRTAK…TGEELGFDYG (118 aa)) is the SET domain. Residues 1048 to 1050 (MGW), Tyr1085, and 1112 to 1113 (NH) each bind S-adenosyl-L-methionine. An interaction with histone H3 region spans residues 1074 to 1093 (DAEADVREDDSYLFDLDNKD). Cys1115 is a Zn(2+) binding site. The interval 1154 to 1157 (YGDR) is interaction with histone H3. The 17-residue stretch at 1164–1180 (KYFTCQCGSEKCKHSAE) folds into the Post-SET domain. Cys1168 provides a ligand contact to Zn(2+). Gln1169 contributes to the S-adenosyl-L-methionine binding site. Residues Cys1170 and Cys1175 each coordinate Zn(2+). A Phosphoserine modification is found at Ser1204. Thr1210 carries the post-translational modification Phosphothreonine.

This sequence belongs to the class V-like SAM-binding methyltransferase superfamily. Histone-lysine methyltransferase family. Suvar3-9 subfamily. As to quaternary structure, heterodimer; heterodimerizes with EHMT1/GLP. Interacts with GFI1B and WIZ. Part of the E2F6.com-1 complex in G0 phase composed of E2F6, MGA, MAX, TFDP1, CBX3, BAT8, EHMT1, RING1, RNF2, MBLR, L3MBTL2 and YAF2. Part of a complex composed of TRIM28, HDAC1, HDAC2 and EHMT2. Interacts with UHRF1. Interacts with CDYL. Interacts with REST only in the presence of CDYL. Part of a complex containing at least CDYL, REST, WIZ, SETB1, EHMT1 and EHMT2. Interacts with PRDM9 and CDYL; interaction only takes place when PRDM9 is bound to hotspot DNA. Interacts with SMYD5. Methylated at Lys-185; automethylated. As to expression, expressed in all tissues examined, with high levels in fetal liver, thymus, lymph node, spleen and peripheral blood leukocytes and lower level in bone marrow.

It localises to the nucleus. Its subcellular location is the chromosome. The enzyme catalyses N(6)-methyl-L-lysyl(9)-[histone H3] + S-adenosyl-L-methionine = N(6),N(6)-dimethyl-L-lysyl(9)-[histone H3] + S-adenosyl-L-homocysteine + H(+). It catalyses the reaction L-lysyl(9)-[histone H3] + S-adenosyl-L-methionine = N(6)-methyl-L-lysyl(9)-[histone H3] + S-adenosyl-L-homocysteine + H(+). Functionally, histone methyltransferase that specifically mono- and dimethylates 'Lys-9' of histone H3 (H3K9me1 and H3K9me2, respectively) in euchromatin. H3K9me represents a specific tag for epigenetic transcriptional repression by recruiting HP1 proteins to methylated histones. Also mediates monomethylation of 'Lys-56' of histone H3 (H3K56me1) in G1 phase, leading to promote interaction between histone H3 and PCNA and regulating DNA replication. Also weakly methylates 'Lys-27' of histone H3 (H3K27me). Also required for DNA methylation, the histone methyltransferase activity is not required for DNA methylation, suggesting that these 2 activities function independently. Probably targeted to histone H3 by different DNA-binding proteins like E2F6, MGA, MAX and/or DP1. May also methylate histone H1. In addition to the histone methyltransferase activity, also methylates non-histone proteins: mediates dimethylation of 'Lys-373' of p53/TP53. Also methylates CDYL, WIZ, ACIN1, DNMT1, HDAC1, ERCC6, KLF12 and itself. The sequence is that of Histone-lysine N-methyltransferase EHMT2 (EHMT2) from Homo sapiens (Human).